Here is a 766-residue protein sequence, read N- to C-terminus: DENN domain-containing protein 1B (766 aa).

A uDENN domain is found at 14–143 (DLVLKVKCHA…YNHPVPKANT (130 aa)). Residues 160–296 (GLPTIPESRN…VVSALKNKLK (137 aa)) form the cDENN domain. Positions 298-375 (QSTATGDGVA…DGRLAKLNAG (78 aa)) constitute a dDENN domain. The FXDXF motif signature appears at 378–382 (FSDIF). Residues 472-523 (NEKGENREKHKLSQTHLKRPHKSLDGTLYDDDDDDDDIERASKISSEDGEET) are disordered. The span at 480-492 (KHKLSQTHLKRPH) shows a compositional bias: basic residues. The segment covering 499 to 509 (LYDDDDDDDDI) has biased composition (acidic residues). The residue at position 500 (Tyr-500) is a Phosphotyrosine. 4 positions are modified to phosphoserine: Ser-516, Ser-517, Ser-530, and Ser-533. The Clathrin box motif lies at 547 to 556 (DLLGEILDTL). Disordered regions lie at residues 611–634 (LGQD…VSSG) and 652–732 (LCAD…KPSK). Ser-632 and Ser-633 each carry phosphoserine. The segment covering 694–704 (TPGQAPLQSED) has biased composition (polar residues). Residues 722–732 (KAGKEDTKPSK) are compositionally biased toward basic and acidic residues.

In terms of assembly, interacts with RAB35. Interacts with clathrin heavy chain/CLTC. Interacts with components of the adapter protein complex 2 (AP-2) AP2A2 and AP2B1. Interacts with CD3E. Phosphorylated on serine and/or threonine, possibly regulating the guanine nucleotide exchange factor (GEF) activity. As to expression, expressed in a subset of dendritic cells (DCs).

Its subcellular location is the cytoplasm. The protein localises to the cytosol. The protein resides in the cytoplasmic vesicle. It localises to the clathrin-coated vesicle. Functionally, guanine nucleotide exchange factor (GEF) for RAB35 that acts as a regulator of T-cell receptor (TCR) internalization in TH2 cells. Acts by promoting the exchange of GDP to GTP, converting inactive GDP-bound RAB35 into its active GTP-bound form. Plays a role in clathrin-mediated endocytosis. Controls cytokine production in TH2 lymphocytes by controlling the rate of TCR internalization and routing to endosomes: acts by mediating clathrin-mediated endocytosis of TCR via its interaction with the adapter protein complex 2 (AP-2) and GEF activity. Dysregulation leads to impaired TCR down-modulation and recycling, affecting cytokine production in TH2 cells. This is DENN domain-containing protein 1B from Mus musculus (Mouse).